Reading from the N-terminus, the 636-residue chain is Transcription termination factor FttA (636 aa).

Positions 4–72 (ELELKRIRDE…VVFRWNVDKR (69 aa)) are KHa. A KHb region spans residues 73-140 (KDPAETKDYI…WQPKTIRTPP (68 aa)). Residues 181–383 (NIRMNALGGF…LLIEATYGGP (203 aa)) form a metallo-beta-lactamase N-terminus region. Zn(2+)-binding residues include His242, His244, Asp246, His247, His329, and Asp352. Residues 384–577 (QDRIPSRQES…LKVFTLEGFS (194 aa)) form a beta-Casp region. Residues 578–636 (GHSSRSQISQFLRRIQPRPKVVIVNHGEESKCVSLSTMIHKKLRKSTKSPKNLEVVLLK) form a metallo-beta-lactamase C-terminus region. His603 is a binding site for Zn(2+).

The protein belongs to the metallo-beta-lactamase superfamily. RNA-metabolizing metallo-beta-lactamase-like family. FttA subfamily. Homodimer. Interacts with RNA polymerase (RNAP), interacts with the Spt4-Spt5 complex. It depends on Zn(2+) as a cofactor.

Functionally, terminates transcription on the whole genome. Termination is linked to FttA-mediated RNA cleavage and does not require NTP hydrolysis. Cleaves endonucleolytically at the RNA exit channel of RNA polymerase (RNAP); the 5'-3' exonuclease activity of this protein degrades the nascent RNA released from RNAP. Its function is as follows. Terminates transcription genome-wide in M.maripaludis. Restores wild-type growth to a strain of Methanococcus maripaludis depleted for this gene at 22 degrees Celsius and prevents transcriptional read-through. Transcription termination is most effective in vivo on RNAs with more than one U4-tract in their 3'-ends. Has endonuclease activity after U-rich tracts in transcription termination sequences. This Lokiarchaeum sp. (strain GC14_75) protein is Transcription termination factor FttA.